The following is a 367-amino-acid chain: DNA-directed RNA polymerase II subunit GRINL1A (367 aa).

The stretch at 15–40 forms a coiled coil; sequence DLERRSLAELREMLKRQERLLRNEKF. Positions 29–68 are important for transcription repressor activity; it reads KRQERLLRNEKFICKLPDKGKKIFDSFAKLKAAIAECEEV. 3 stretches are compositionally biased toward polar residues: residues 117 to 131, 176 to 185, and 205 to 225; these read SVDNIKSSQTSQNQG, RVSSQAEDTS, and GEQQSENASTKNLTGLSSGTQ. Disordered regions lie at residues 117–185, 203–225, and 254–281; these read SVDN…EDTS, DQGEQQSENASTKNLTGLSSGTQ, and PFRQNDSSSHCQKSRSPISSEERRRRDK. An interaction with Pol II region spans residues 226–297; it reads KKPHYMEVLE…TAARLLPLHH (72 aa). Serine 269 carries the post-translational modification Phosphoserine. The important for transcription repressor activity stretch occupies residues 298–313; sequence MPTQLLSIEESLALQK. Residues 300–329 adopt a coiled-coil conformation; sequence TQLLSIEESLALQKQRKQKYEEMQAKLAAQ. An interaction with Pol II region spans residues 314–339; sequence QRKQKYEEMQAKLAAQKLAERLNIKM. Residues 335-367 are disordered; the sequence is LNIKMRSYNPEGESSGRYREVRDEDDDWSSDEF. Residues 357–367 are compositionally biased toward acidic residues; sequence DEDDDWSSDEF.

This sequence belongs to the GRINL1 family. Component of the Pol II(G) complex, which contains the RNA polymerase II (Pol II) core complex subunits and POLR2M isoform 1. Pol II(G) appears to be an abundant form of Pol II. Dephosphorylated at Ser-269 by the PNUTS-PP1 complex, promoting RNA polymerase II transcription pause-release.

The protein localises to the nucleus. Functionally, appears to be a stable component of the Pol II(G) complex form of RNA polymerase II (Pol II). Pol II synthesizes mRNA precursors and many functional non-coding RNAs and is the central component of the basal RNA polymerase II transcription machinery. May play a role in the Mediator complex-dependent regulation of transcription activation. Acts as a negative regulator of transcriptional activation; this repression is relieved by the Mediator complex, which restores Pol II(G) activator-dependent transcription to a level equivalent to that of Pol II. The chain is DNA-directed RNA polymerase II subunit GRINL1A (POLR2M) from Pongo abelii (Sumatran orangutan).